Reading from the N-terminus, the 101-residue chain is Urease subunit beta (101 aa).

The protein belongs to the urease beta subunit family. In terms of assembly, heterotrimer of UreA (gamma), UreB (beta) and UreC (alpha) subunits. Three heterotrimers associate to form the active enzyme.

The protein resides in the cytoplasm. The enzyme catalyses urea + 2 H2O + H(+) = hydrogencarbonate + 2 NH4(+). Its pathway is nitrogen metabolism; urea degradation; CO(2) and NH(3) from urea (urease route): step 1/1. The chain is Urease subunit beta from Ectopseudomonas mendocina (strain ymp) (Pseudomonas mendocina).